The sequence spans 201 residues: MINKAILGGTFDPIHNAHINVAYEALERFNLEEVIFIPAGNPPHKIKLKKTPAHIRYEMVKLAIEKETRFSISDFEIKSKDLSYTYRTLKHFKEKEPETNWYFITGEDCLSYLEHWKYIDEIFNICNFVIFSREGFKGKEEIIKKKKSMLLKYGKEILFMDASILDISSTKIRNRIKEGKEVSFYMPDKVYKFILQNNLYK.

The protein belongs to the NadD family.

The catalysed reaction is nicotinate beta-D-ribonucleotide + ATP + H(+) = deamido-NAD(+) + diphosphate. The protein operates within cofactor biosynthesis; NAD(+) biosynthesis; deamido-NAD(+) from nicotinate D-ribonucleotide: step 1/1. Functionally, catalyzes the reversible adenylation of nicotinate mononucleotide (NaMN) to nicotinic acid adenine dinucleotide (NaAD). This chain is Probable nicotinate-nucleotide adenylyltransferase, found in Clostridium botulinum (strain Loch Maree / Type A3).